Reading from the N-terminus, the 292-residue chain is CCR4-NOT transcription complex subunit 8 (292 aa).

The a divalent metal cation site is built by Asp-40, Glu-42, Asp-161, and Asp-230.

It belongs to the CAF1 family. In terms of assembly, component of the CCR4-NOT complex; distinct complexes seem to exist that differ in the participation of probably mutually exclusive catalytic subunits; the complex contains two deadenylase subunits, CNOT6 or CNOT6L, and CNOT7 or CNOT8. In the complex interacts directly with CNOT1. Interacts with BTG1, BTG2 and TOB1. Interacts with BTG4.

It localises to the cytoplasm. The protein resides in the nucleus. The catalysed reaction is Exonucleolytic cleavage of poly(A) to 5'-AMP.. In terms of biological role, has 3'-5' poly(A) exoribonuclease activity for synthetic poly(A) RNA substrate. Its function seems to be partially redundant with that of CNOT7. Catalytic component of the CCR4-NOT complex which is linked to various cellular processes including bulk mRNA degradation, miRNA-mediated repression, translational repression during translational initiation and general transcription regulation. During miRNA-mediated repression the complex also seems to act as translational repressor during translational initiation. Additional complex functions may be a consequence of its influence on mRNA expression. Associates with members of the BTG family such as TOB1 and BTG2 and is required for their anti-proliferative activity. In Mus musculus (Mouse), this protein is CCR4-NOT transcription complex subunit 8 (Cnot8).